The following is a 72-amino-acid chain: Penaeidin-2a (72 aa).

The first 21 residues, 1 to 21, serve as a signal peptide directing secretion; it reads MRLVVCLVFLASFALVCQGEA. Intrachain disulfides connect C45–C59, C48–C66, and C60–C67. Residue K71 is modified to Lysine amide.

In terms of tissue distribution, higher expression in hemocytes and to a lesser extent in heart, testis, gills, intestine, lymphoid organ and hepatopancreas. Traces in eyes and subcuticular epithelium. Not present in the brain.

The protein localises to the cytoplasmic granule. Antibacterial activity against M.luteus and E.coli bacteria. Antifungal activity against N.crassa and F.oxysporum. Presents chitin-binding activity. The sequence is that of Penaeidin-2a from Penaeus vannamei (Whiteleg shrimp).